Consider the following 190-residue polypeptide: Threonylcarbamoyl-AMP synthase (190 aa).

The YrdC-like domain occupies 7-190; it reads TGSIAAAVDL…ALTGELFRQG (184 aa).

It belongs to the SUA5 family. TsaC subfamily.

Its subcellular location is the cytoplasm. The enzyme catalyses L-threonine + hydrogencarbonate + ATP = L-threonylcarbamoyladenylate + diphosphate + H2O. Required for the formation of a threonylcarbamoyl group on adenosine at position 37 (t(6)A37) in tRNAs that read codons beginning with adenine. Catalyzes the conversion of L-threonine, HCO(3)(-)/CO(2) and ATP to give threonylcarbamoyl-AMP (TC-AMP) as the acyladenylate intermediate, with the release of diphosphate. The protein is Threonylcarbamoyl-AMP synthase of Salmonella choleraesuis (strain SC-B67).